A 445-amino-acid chain; its full sequence is MSERKFFGTDGIRGKVGSGQMTPELALKLGWAAGRVLSRSGTKKVIIGKDTRISGYMFESALEAGLSAAGLNVMLMGPMPTPAVAYLTRTFRAEAGVVISASHNPYYDNGIKFFSTDGSKLDDNLELEIEAELEKPLVCVESHLLGKVSRIEDARGRYIEYCKGNFPADQTLTGLKIVVDCAHGATYHIAPAVFRELGAEVIAIGDKPNGVNINDKVGATSMAKICETVLAETADLGIALDGDGDRIMMVNSKGEVIDGDQILYILACDAKARGVLRGGVVGTLMSNLGLDLALQALDIPFARSKVGDRYVMELLKELDWRIGGENSGHILNLDHGTTGDGIVAGILVLAAMRRQNATLEQLTAPMEMLPQVLVNVRFEGEHDPLSSDKVKAAQAQVESELGVRGRVLLRKSGTEPLIRVMVEGDDHNTVLAHANLIADAVKSAS.

The active-site Phosphoserine intermediate is Ser102. Mg(2+) contacts are provided by Ser102, Asp241, Asp243, and Asp245. Ser102 is modified (phosphoserine).

The protein belongs to the phosphohexose mutase family. Mg(2+) is required as a cofactor. Activated by phosphorylation.

The enzyme catalyses alpha-D-glucosamine 1-phosphate = D-glucosamine 6-phosphate. Catalyzes the conversion of glucosamine-6-phosphate to glucosamine-1-phosphate. This Shewanella oneidensis (strain ATCC 700550 / JCM 31522 / CIP 106686 / LMG 19005 / NCIMB 14063 / MR-1) protein is Phosphoglucosamine mutase.